Reading from the N-terminus, the 189-residue chain is Small ribosomal subunit protein uS4 (189 aa).

The S4 RNA-binding domain maps to 107–181 (RRLQTQVFKL…VKRRTLRKGD (75 aa)). The tract at residues 161–189 (QSPYGGGRPGRVKRRTLRKGDGAGGDDEE) is disordered.

It belongs to the universal ribosomal protein uS4 family. In terms of assembly, component of the small ribosomal subunit. Part of the small subunit (SSU) processome, composed of more than 70 proteins and the RNA chaperone small nucleolar RNA (snoRNA) U3.

Its subcellular location is the cytoplasm. The protein localises to the nucleus. The protein resides in the nucleolus. Component of the small ribosomal subunit. The ribosome is a large ribonucleoprotein complex responsible for the synthesis of proteins in the cell. Part of the small subunit (SSU) processome, first precursor of the small eukaryotic ribosomal subunit. During the assembly of the SSU processome in the nucleolus, many ribosome biogenesis factors, an RNA chaperone and ribosomal proteins associate with the nascent pre-rRNA and work in concert to generate RNA folding, modifications, rearrangements and cleavage as well as targeted degradation of pre-ribosomal RNA by the RNA exosome. The protein is Small ribosomal subunit protein uS4 (rps-9) of Caenorhabditis elegans.